Reading from the N-terminus, the 414-residue chain is tRNA(Ile)-lysidine synthase (414 aa).

13-18 (SGGIDS) lines the ATP pocket.

The protein belongs to the tRNA(Ile)-lysidine synthase family.

The protein localises to the cytoplasm. It catalyses the reaction cytidine(34) in tRNA(Ile2) + L-lysine + ATP = lysidine(34) in tRNA(Ile2) + AMP + diphosphate + H(+). Ligates lysine onto the cytidine present at position 34 of the AUA codon-specific tRNA(Ile) that contains the anticodon CAU, in an ATP-dependent manner. Cytidine is converted to lysidine, thus changing the amino acid specificity of the tRNA from methionine to isoleucine. The chain is tRNA(Ile)-lysidine synthase from Thermotoga maritima (strain ATCC 43589 / DSM 3109 / JCM 10099 / NBRC 100826 / MSB8).